We begin with the raw amino-acid sequence, 569 residues long: Carotenoid cleavage dioxygenase 8 homolog B, chloroplastic (569 aa).

The N-terminal 43 residues, 1–43 (MSPAMLQASSLCVSAALSGAASRPGRLASQGHQGKRAVAQPLA), are a transit peptide targeting the chloroplast. Residues 23–81 (RPGRLASQGHQGKRAVAQPLAASAVTEAAPPAPVVAPPARPVDAPRRRGGRGGGGGGGE) form a disordered region. Pro residues predominate over residues 52–62 (PPAPVVAPPAR). Fe cation-binding residues include His251, His301, His368, and His558.

It belongs to the carotenoid oxygenase family. Fe(2+) serves as cofactor. As to expression, expressed in parenchyma cells of the root stele, shoot apex, leaf buds, xylem parenchyma cells of the stem, inflorescences and panicles.

The protein localises to the plastid. Its subcellular location is the chloroplast. The catalysed reaction is 9-cis-10'-apo-beta-carotenal + 2 O2 = (2E,4E,6E)-7-hydroxy-4-methylhepta-2,4,6-trienal + (11R)-carlactone. It carries out the reaction all-trans-10'-apo-beta-carotenal + O2 = (2E,4E,6E)-4-methylocta-2,4,6-trienedial + 13-apo-beta-carotenone. Its function is as follows. Involved in strigolactones biosynthesis by cleaving the C(27) 9-cis-10'-apo-beta-carotenal produced by CCD7. Produces the C(19) carlactone and a C(8) hydroxyaldehyde. Also shows lower activity with all-trans-10'-apo-beta-carotenal producing a C(9) dialdehyde and the C(18) 13-apo-beta-carotenone. Strigolactones are hormones that inhibit tillering and shoot branching through the MAX-dependent pathway, contribute to the regulation of shoot architectural response to phosphate-limiting conditions and function as rhizosphere signal that stimulates hyphal branching of arbuscular mycorrhizal fungi and trigger seed germination of root parasitic weeds. The sequence is that of Carotenoid cleavage dioxygenase 8 homolog B, chloroplastic (CCD8B) from Oryza sativa subsp. japonica (Rice).